The chain runs to 142 residues: Small ribosomal subunit protein uS19 (142 aa).

This sequence belongs to the universal ribosomal protein uS19 family. As to quaternary structure, component of the small ribosomal subunit. Mature ribosomes consist of a small (40S) and a large (60S) subunit. The 40S subunit contains about 32 different proteins and 1 molecule of RNA (18S). The 60S subunit contains 45 different proteins and 3 molecules of RNA (25S, 5.8S and 5S).

The protein localises to the cytoplasm. Component of the ribosome, a large ribonucleoprotein complex responsible for the synthesis of proteins in the cell. The small ribosomal subunit (SSU) binds messenger RNAs (mRNAs) and translates the encoded message by selecting cognate aminoacyl-transfer RNA (tRNA) molecules. The large subunit (LSU) contains the ribosomal catalytic site termed the peptidyl transferase center (PTC), which catalyzes the formation of peptide bonds, thereby polymerizing the amino acids delivered by tRNAs into a polypeptide chain. The nascent polypeptides leave the ribosome through a tunnel in the LSU and interact with protein factors that function in enzymatic processing, targeting, and the membrane insertion of nascent chains at the exit of the ribosomal tunnel. RPS15 has a role in the late stage of the assembly of pre-40S particles within the nucleus and controls their export to the cytoplasm. This is Small ribosomal subunit protein uS19 (RPS15) from Candida albicans (strain SC5314 / ATCC MYA-2876) (Yeast).